The primary structure comprises 490 residues: uncharacterized protein (490 aa).

Over residues 370–385 the composition is skewed to low complexity; it reads FSMKRPSSSSSSLSGS. The interval 370 to 406 is disordered; sequence FSMKRPSSSSSSLSGSWHGDTENSVKQSLASPSEASL. Polar residues predominate over residues 391–406; sequence ENSVKQSLASPSEASL.

The protein resides in the cytoplasm. Its subcellular location is the nucleus. This is an uncharacterized protein from Schizosaccharomyces pombe (strain 972 / ATCC 24843) (Fission yeast).